The primary structure comprises 192 residues: Adenylate kinase (192 aa).

12 to 17 (GSGKTT) serves as a coordination point for ATP. The segment at 34-63 (STGDLLRAEVASGSELGQTIKSYIDNGNLV) is NMP. AMP is bound by residues Thr35, Arg40, 61–63 (NLV), 88–91 (GFPR), and Gln95. The tract at residues 130–136 (GRARGAD) is LID. An ATP-binding site is contributed by Arg131. 2 residues coordinate AMP: Arg133 and Arg145. Position 173 (Arg173) interacts with ATP.

This sequence belongs to the adenylate kinase family. In terms of assembly, monomer.

Its subcellular location is the cytoplasm. It carries out the reaction AMP + ATP = 2 ADP. Its pathway is purine metabolism; AMP biosynthesis via salvage pathway; AMP from ADP: step 1/1. Functionally, catalyzes the reversible transfer of the terminal phosphate group between ATP and AMP. Plays an important role in cellular energy homeostasis and in adenine nucleotide metabolism. The sequence is that of Adenylate kinase from Nautilia profundicola (strain ATCC BAA-1463 / DSM 18972 / AmH).